The chain runs to 193 residues: Acyl carrier protein phosphodiesterase (193 aa).

The protein belongs to the AcpH family.

The catalysed reaction is holo-[ACP] + H2O = apo-[ACP] + (R)-4'-phosphopantetheine + H(+). Functionally, converts holo-ACP to apo-ACP by hydrolytic cleavage of the phosphopantetheine prosthetic group from ACP. The protein is Acyl carrier protein phosphodiesterase of Yersinia enterocolitica serotype O:8 / biotype 1B (strain NCTC 13174 / 8081).